We begin with the raw amino-acid sequence, 103 residues long: Co-chaperonin GroES (103 aa).

Belongs to the GroES chaperonin family. In terms of assembly, heptamer of 7 subunits arranged in a ring. Interacts with the chaperonin GroEL.

The protein resides in the cytoplasm. Together with the chaperonin GroEL, plays an essential role in assisting protein folding. The GroEL-GroES system forms a nano-cage that allows encapsulation of the non-native substrate proteins and provides a physical environment optimized to promote and accelerate protein folding. GroES binds to the apical surface of the GroEL ring, thereby capping the opening of the GroEL channel. The protein is Co-chaperonin GroES of Synechococcus sp. (strain WH7803).